Reading from the N-terminus, the 255-residue chain is Spectinomycin 9-adenylyltransferase (255 aa).

It carries out the reaction spectinomycin + ATP = 9-O-adenylylspectinomycin + diphosphate. In terms of biological role, mediates bacterial resistance to the antibiotic spectinomycin but not streptomycin. The sequence is that of Spectinomycin 9-adenylyltransferase from Enterococcus faecalis (Streptococcus faecalis).